Consider the following 76-residue polypeptide: Esculentin-2MT2 (76 aa).

The signal sequence occupies residues 1–22 (MFTLKKSMLLLFFLGTISLSLC). Positions 23-37 (EEERSADEDDGEKEV) are cleaved as a propeptide — removed in mature form. Cys-70 and Cys-76 are oxidised to a cystine.

It belongs to the frog skin active peptide (FSAP) family. Esculentin subfamily. As to expression, expressed by the skin glands.

Its subcellular location is the secreted. Antimicrobial peptide. Active against a variety of Gram-negative and Gram-positive bacterial strains. Active against fungi. Shows strong hemolytic activity against human erythrocytes. The chain is Esculentin-2MT2 from Amolops mantzorum (Sichuan torrent frog).